We begin with the raw amino-acid sequence, 53 residues long: Large ribosomal subunit protein eL40 (53 aa).

It belongs to the eukaryotic ribosomal protein eL40 family.

This Pyrobaculum calidifontis (strain DSM 21063 / JCM 11548 / VA1) protein is Large ribosomal subunit protein eL40.